Consider the following 328-residue polypeptide: Methionyl-tRNA formyltransferase (328 aa).

121-124 (SLLP) contacts (6S)-5,6,7,8-tetrahydrofolate.

This sequence belongs to the Fmt family.

The enzyme catalyses L-methionyl-tRNA(fMet) + (6R)-10-formyltetrahydrofolate = N-formyl-L-methionyl-tRNA(fMet) + (6S)-5,6,7,8-tetrahydrofolate + H(+). Its function is as follows. Attaches a formyl group to the free amino group of methionyl-tRNA(fMet). The formyl group appears to play a dual role in the initiator identity of N-formylmethionyl-tRNA by promoting its recognition by IF2 and preventing the misappropriation of this tRNA by the elongation apparatus. The protein is Methionyl-tRNA formyltransferase of Paraburkholderia phytofirmans (strain DSM 17436 / LMG 22146 / PsJN) (Burkholderia phytofirmans).